We begin with the raw amino-acid sequence, 2185 residues long: MGAQVSTQKTGAHETRLNASGNSIIHYTNINYYKDAASNSANRQDFTQDPGKFTEPVKDIMIKSLPALNSPTVEECGYSDRARSITLGNSTITTQECANVVVGYGVWPDYLKDSEATAEDQPTQPDVATCRFYTLDSVQWQKTSPGWWWKLPDALSNLGLFGQNMQYHYLGRTGYTVHVQCNASKFHQGCLLVVCVPEAEMGCATLDNTPSSAELLGGDTAKEFADKPVASGSNKLVQRVVYNAGMGVGVGNLTIFPHQWINLRTNNSATIVMPYTNSVPMDNMFRHNNVTLMVIPFVPLDYCPGSTTYVPITVTIAPMCAEYNGLRLAGHQGLPTMNTPGSCQFLTSDDFQSPSAMPQYDVTPEMRIPGEVKNLMEIAEVDSVVPVQNVGEKVNSMEAYQIPVRSNEGSGTQVFGFPLQPGYSSVFSRTLLGEILNYYTHWSGSIKLTFMFCGSAMATGKFLLAYSPPGAGAPTKRVDAMLGTHVIWDVGLQSSCVLCIPWISQTHYRFVASDEYTAGGFITCWYQTNIVVPADAQSSCYIMCFVSACNDFSVRLLKDTPFISQQNFFQGPVEDAITAAIGRVADTVGTGPTNSEAIPALTAAETGHTSQVVPGDTMQTRHVKNYHSRSESTIENFLCRSACVYFTEYKNSGAKRYAEWVLTPRQAAQLRRKLEFFTYVRFDLELTFVITSTQQPSTTQNQDAQILTHQIMYVPPGGPVPDKVDSYVWQTSTNPSVFWTEGNAPPRMSIPFLSIGNAYSNFYDGWSEFSRNGVYGINTLNNMGTLYARHVNAGSTGPIKSTIRIYFKPKHVKAWIPRPPRLCQYEKAKNVNFQPSGVTTTRQSITTMTNTGAFGQQSGAVYVGNYRVVNRHLATSADWQNCVWESYNRDLLVSTTTAHGCDIIARCQCTTGVYFCASKNKHYPISFEGPGLVEVQESEYYPRRYQSHVLLAAGFSEPGDCGGILRCEHGVIGIVTMGGEGVVGFADIRDLLWLEDDAMEQGVKDYVEQLGNAFGSGFTNQICEQVNLLKESLVGQDSILEKSLKALVKIISALVIVVRNHDDLITVTATLALIGCTSSPWRWLKQKVSQYYGIPMAERQNNSWLKKFTEMTNACKGMEWIAVKIQKFIEWLKVKILPEVREKHEFLNRLKQLPLLESQIATIEQSAPSQSDQEQLFSNVQYFAHYCRKYAPLYAAEAKRVFSLEKKMSNYIQFKSKCRIEPVCLLLHGSPGAGKSVATNLIGRSLAEKLNSSVYSLPPDPDHFDGYKQQAVVIMDDLCQNPDGKDVSLFCQMVSSVDFVPPMAALEEKGILFTSPFVLASTNAGSINAPTVSDSRALARRFHFDMNIEVISMYSQNGKINMPMSVKTCDDECCPVNFKKCCPLVCGKAIQFIDRRTQVRYSLDMLVTEMFREYNHRHSVGTTLEALFQGPPVYREIKISVAPETPPPPAIADLLKSVDSEAVREYCKEKGWLVPEINSTLQIEKHVSRAFICLQALTTFVSVAGIIYIIYKLFAGFQGAYTGVPNQKPRVPTLRQAKVQGPAFEFAVAMMKRNSSTVKTEYGEFTMLGIYDRWAVLPRHAKPGPTILMNDQEVGVLDAKELVDKDGTNLELTLLKLNRNEKFRDIRGFLAKEEVEVNEAVLAINTSKFPNMYIPVGQVTEYGFLNLGGTPTKRMLMYNFPTRAGQCGGVLMSTGKVLGIHVGGNGHQGFSAALLKHYFNDEQGEIEFIESSKDAGFPVINTPSKTKLEPSVFHQVFEGNKEPAVLRSGDPRLKANFEEAIFSKYIGNVNTHVDEYMLEAVDHYAGQLATLDISTEPMKLEDAVYGTEGLEALDLTTSAGYPYVALGIKKRDILSKKTKDLTKLKECMDKYGLNLPMVTYVKDELRSIEKVAKGKSRLIEASSLNDSVAMRQTFGNLYKTFHLNPGVVTGSAVGCDPDLFWSKIPVMLDGHLIAFDYSGYDASLSPVWFACLKMLLEKLGYTHKETNYIDYLCNSHHLYRDKHYFVRGGMPSGCSGTSIFNSMINNIIIRTLMLKVYKGIDLDQFRMIAYGDDVIASYPWPIDASLLAEAGKGYGLIMTPADKGECFNEVTWTNATFLKRYFRADEQYPFLVHPVMPMKDIHESIRWTKDPKNTQDHVRSLCLLAWHNGEHEYEEFIRKIRSVPVGRCLTLPAFSTLRRKWLDSF.

Gly-2 carries the N-myristoyl glycine; by host lipid modification. Topologically, residues 2–1495 are cytoplasmic; that stretch reads GAQVSTQKTG…HVSRAFICLQ (1494 aa). Residues 568–584 are amphipathic alpha-helix; it reads FFQGPVEDAITAAIGRV. Residues His-872 and Asp-890 each act as for protease 2A activity in the active site. Zn(2+)-binding residues include Cys-907 and Cys-909. The For protease 2A activity role is filled by Cys-961. Zn(2+) contacts are provided by Cys-967 and His-969. The interval 1101–1173 is membrane-binding; sequence NNSWLKKFTE…EQSAPSQSDQ (73 aa). The tract at residues 1101 to 1239 is oligomerization; sequence NNSWLKKFTE…SPGAGKSVAT (139 aa). The RNA-binding stretch occupies residues 1122 to 1126; the sequence is AVKIQ. The SF3 helicase domain maps to 1205 to 1361; the sequence is EKKMSNYIQF…SMYSQNGKIN (157 aa). 3 residues coordinate Zn(2+): Cys-1369, Cys-1381, and Cys-1386. The C4-type; degenerate zinc finger occupies 1369–1386; it reads CDDECCPVNFKKCCPLVC. The segment at 1413-1420 is RNA-binding; it reads EYNHRHSV. The interval 1424–1429 is oligomerization; the sequence is LEALFQ. An intramembrane segment occupies 1496-1511; sequence ALTTFVSVAGIIYIIY. At 1512–2185 the chain is on the cytoplasmic side; the sequence is KLFAGFQGAY…TLRRKWLDSF (674 aa). At Tyr-1521 the chain carries O-(5'-phospho-RNA)-tyrosine. The region spanning 1541–1719 is the Peptidase C3 domain; that stretch reads GPAFEFAVAM…FSAALLKHYF (179 aa). Active-site for protease 3C activity residues include His-1580, Glu-1611, and Cys-1687. In terms of domain architecture, RdRp catalytic spans 1950 to 2066; that stretch reads GHLIAFDYSG…SYPWPIDASL (117 aa). Residues Asp-1956 and Asp-2052 each coordinate Mg(2+).

Belongs to the picornaviruses polyprotein family. As to quaternary structure, interacts with capsid protein VP1 and capsid protein VP3 to form heterotrimeric protomers. Interacts with capsid protein VP0, and capsid protein VP3 to form heterotrimeric protomers. Five protomers subsequently associate to form pentamers which serve as building blocks for the capsid. Interacts with capsid protein VP2, capsid protein VP3 and capsid protein VP4 following cleavage of capsid protein VP0. Interacts with host CD55. Interacts with host CXADR. In terms of assembly, interacts with capsid protein VP1 and capsid protein VP3 in the mature capsid. As to quaternary structure, interacts with capsid protein VP0 and capsid protein VP1 to form heterotrimeric protomers. Five protomers subsequently associate to form pentamers which serve as building blocks for the capsid. Interacts with capsid protein VP4 in the mature capsid. Interacts with protein 2C; this interaction may be important for virion morphogenesis. Interacts with capsid protein VP1 and capsid protein VP3. In terms of assembly, homodimer. As to quaternary structure, homohexamer; forms a hexameric ring structure with 6-fold symmetry characteristic of AAA+ ATPases. Interacts (via N-terminus) with host RTN3 (via reticulon domain); this interaction is important for viral replication. Interacts with capsid protein VP3; this interaction may be important for virion morphogenesis. Interacts with protein 3CD. In terms of assembly, homodimer. Interacts with host GBF1. Interacts (via GOLD domain) with host ACBD3 (via GOLD domain); this interaction allows the formation of a viral protein 3A/ACBD3 heterotetramer with a 2:2 stoichiometry, which will stimulate the recruitment of host PI4KB in order to synthesize PI4P at the viral RNA replication sites. As to quaternary structure, interacts with RNA-directed RNA polymerase. Interacts with host TICAM1 (via C-terminus). In terms of assembly, interacts with protein 3AB and with RNA-directed RNA polymerase. As to quaternary structure, interacts with Viral protein genome-linked and with protein 3CD. It depends on Mg(2+) as a cofactor. Post-translationally, specific enzymatic cleavages in vivo by the viral proteases yield processing intermediates and the mature proteins. In terms of processing, myristoylation is required for the formation of pentamers during virus assembly. Further assembly of 12 pentamers and a molecule of genomic RNA generates the provirion. During virion maturation, immature virions are rendered infectious following cleavage of VP0 into VP4 and VP2. This maturation seems to be an autocatalytic event triggered by the presence of RNA in the capsid and it is followed by a conformational change infectious virion. Post-translationally, myristoylation is required during RNA encapsidation and formation of the mature virus particle. In terms of processing, VPg is uridylylated by the polymerase into VPg-pUpU. This acts as a nucleotide-peptide primer for the genomic RNA replication.

It is found in the virion. The protein resides in the host cytoplasm. It localises to the host cytoplasmic vesicle membrane. The protein localises to the host nucleus. It carries out the reaction a ribonucleoside 5'-triphosphate + H2O = a ribonucleoside 5'-diphosphate + phosphate + H(+). It catalyses the reaction Selective cleavage of Tyr-|-Gly bond in the picornavirus polyprotein.. The enzyme catalyses RNA(n) + a ribonucleoside 5'-triphosphate = RNA(n+1) + diphosphate. The catalysed reaction is Selective cleavage of Gln-|-Gly bond in the poliovirus polyprotein. In other picornavirus reactions Glu may be substituted for Gln, and Ser or Thr for Gly.. With respect to regulation, replication or transcription is subject to high level of random mutations by the nucleotide analog ribavirin. Its function is as follows. Forms an icosahedral capsid of pseudo T=3 symmetry with capsid proteins VP2 and VP3. The capsid is 300 Angstroms in diameter, composed of 60 copies of each capsid protein and enclosing the viral positive strand RNA genome. Capsid protein VP1 mainly forms the vertices of the capsid. Capsid protein VP1 interacts with host CD55 and CXADR to provide virion attachment to target host cells. This attachment induces virion internalization. Tyrosine kinases are probably involved in the entry process. After binding to its receptor, the capsid undergoes conformational changes. Capsid protein VP1 N-terminus (that contains an amphipathic alpha-helix) and capsid protein VP4 are externalized. Together, they shape a pore in the host membrane through which viral genome is translocated to host cell cytoplasm. In terms of biological role, forms an icosahedral capsid of pseudo T=3 symmetry with capsid proteins VP2 and VP3. The capsid is 300 Angstroms in diameter, composed of 60 copies of each capsid protein and enclosing the viral positive strand RNA genome. Lies on the inner surface of the capsid shell. After binding to the host receptor, the capsid undergoes conformational changes. Capsid protein VP4 is released, Capsid protein VP1 N-terminus is externalized, and together, they shape a pore in the host membrane through which the viral genome is translocated into the host cell cytoplasm. Functionally, component of immature procapsids, which is cleaved into capsid proteins VP4 and VP2 after maturation. Allows the capsid to remain inactive before the maturation step. Its function is as follows. Cysteine protease that cleaves viral polyprotein and specific host proteins. It is responsible for the autocatalytic cleavage between the P1 and P2 regions, which is the first cleavage occurring in the polyprotein. Also cleaves the host translation initiation factor EIF4G1, in order to shut down the capped cellular mRNA translation. Inhibits the host nucleus-cytoplasm protein and RNA trafficking by cleaving host members of the nuclear pores. Counteracts stress granule formation probably by antagonizing its assembly or promoting its dissassembly. Cleaves and inhibits host IFIH1/MDA5, thereby inhibiting the type-I IFN production and the establishment of the antiviral state. Cleaves and inhibits host MAVS, thereby inhibiting the type-I IFN production and the establishment of the antiviral state. In terms of biological role, plays an essential role in the virus replication cycle by acting as a viroporin. Creates a pore in the host endoplasmic reticulum and as a consequence releases Ca2+ in the cytoplasm of infected cell. In turn, high levels of cytoplasmic calcium may trigger membrane trafficking and transport of viral ER-associated proteins to viroplasms, sites of viral genome replication. Induces and associates with structural rearrangements of intracellular membranes. Displays RNA-binding, nucleotide binding and NTPase activities. May play a role in virion morphogenesis and viral RNA encapsidation by interacting with the capsid protein VP3. Functionally, localizes the viral replication complex to the surface of membranous vesicles. Together with protein 3CD binds the Cis-Active RNA Element (CRE) which is involved in RNA synthesis initiation. Acts as a cofactor to stimulate the activity of 3D polymerase, maybe through a nucleid acid chaperone activity. Its function is as follows. Localizes the viral replication complex to the surface of membranous vesicles. It inhibits host cell endoplasmic reticulum-to-Golgi apparatus transport and causes the disassembly of the Golgi complex, possibly through GBF1 interaction. This would result in depletion of MHC, trail receptors and IFN receptors at the host cell surface. Plays an essential role in viral RNA replication by recruiting ACBD3 and PI4KB at the viral replication sites, thereby allowing the formation of the rearranged membranous structures where viral replication takes place. In terms of biological role, acts as a primer for viral RNA replication and remains covalently bound to viral genomic RNA. VPg is uridylylated prior to priming replication into VPg-pUpU. The oriI viral genomic sequence may act as a template for this. The VPg-pUpU is then used as primer on the genomic RNA poly(A) by the RNA-dependent RNA polymerase to replicate the viral genome. During genome replication, the VPg-RNA linkage is removed by the host TDP2, thereby accelerating replication. During the late stage of the replication cycle, host TDP2 is excluded from sites of viral RNA synthesis and encapsidation, allowing for the generation of progeny virions. Involved in the viral replication complex and viral polypeptide maturation. It exhibits protease activity with a specificity and catalytic efficiency that is different from protease 3C. Protein 3CD lacks polymerase activity. Protein 3CD binds to the 5'UTR of the viral genome. Functionally, major viral protease that mediates proteolytic processing of the polyprotein. Cleaves host EIF5B, contributing to host translation shutoff. Cleaves also host PABPC1, contributing to host translation shutoff. Cleaves and inhibits host RIGI, thereby inhibiting the type-I IFN production and the establishment of the antiviral state. Cleaves and inhibits host MAVS, thereby inhibiting the type-I IFN production and the establishment of the antiviral state. Cleaves and inhibits host TICAM1/TRIF, thereby inhibiting the type-I IFN production. Cleaves host NLRP1, triggers host N-glycine-mediated degradation of the autoinhibitory NLRP1 N-terminal fragment. Cleaves host transcription factor TFEB, thereby disrupting host lysosomal functions and enhancing viral infection. Its function is as follows. Replicates the viral genomic RNA on the surface of intracellular membranes. May form linear arrays of subunits that propagate along a strong head-to-tail interaction called interface-I. Covalently attaches UMP to a tyrosine of VPg, which is used to prime RNA synthesis. The positive stranded RNA genome is first replicated at virus induced membranous vesicles, creating a dsRNA genomic replication form. This dsRNA is then used as template to synthesize positive stranded RNA genomes. ss(+)RNA genomes are either translated, replicated or encapsidated. The polypeptide is Genome polyprotein (Coxsackievirus B3 (strain Nancy)).